The sequence spans 105 residues: Large ribosomal subunit protein bL21c (105 aa).

Belongs to the bacterial ribosomal protein bL21 family. As to quaternary structure, part of the 50S ribosomal subunit.

The protein localises to the plastid. It is found in the chloroplast. Its function is as follows. This protein binds to 23S rRNA. The sequence is that of Large ribosomal subunit protein bL21c from Trieres chinensis (Marine centric diatom).